The following is a 408-amino-acid chain: Succinylornithine transaminase (408 aa).

N6-(pyridoxal phosphate)lysine is present on Lys252.

This sequence belongs to the class-III pyridoxal-phosphate-dependent aminotransferase family. AstC subfamily. The cofactor is pyridoxal 5'-phosphate.

The catalysed reaction is N(2)-succinyl-L-ornithine + 2-oxoglutarate = N-succinyl-L-glutamate 5-semialdehyde + L-glutamate. The protein operates within amino-acid degradation; L-arginine degradation via AST pathway; L-glutamate and succinate from L-arginine: step 3/5. Catalyzes the transamination of N(2)-succinylornithine and alpha-ketoglutarate into N(2)-succinylglutamate semialdehyde and glutamate. Can also act as an acetylornithine aminotransferase. This chain is Succinylornithine transaminase, found in Salmonella heidelberg (strain SL476).